The sequence spans 518 residues: GMP synthase [glutamine-hydrolyzing] (518 aa).

In terms of domain architecture, Glutamine amidotransferase type-1 spans 6–200; sequence RLLIIDFGSQ…FVRLAGFKGD (195 aa). Cys-84 (nucleophile) is an active-site residue. Catalysis depends on residues His-175 and Glu-177. In terms of domain architecture, GMPS ATP-PPase spans 201–393; it reads WTMGAYREEA…LGLPESFIGR (193 aa). Residue 228-234 participates in ATP binding; it reads SGGVDSS.

Homodimer.

The enzyme catalyses XMP + L-glutamine + ATP + H2O = GMP + L-glutamate + AMP + diphosphate + 2 H(+). Its pathway is purine metabolism; GMP biosynthesis; GMP from XMP (L-Gln route): step 1/1. Catalyzes the synthesis of GMP from XMP. This is GMP synthase [glutamine-hydrolyzing] from Cereibacter sphaeroides (strain ATCC 17023 / DSM 158 / JCM 6121 / CCUG 31486 / LMG 2827 / NBRC 12203 / NCIMB 8253 / ATH 2.4.1.) (Rhodobacter sphaeroides).